A 164-amino-acid polypeptide reads, in one-letter code: Protein HIT1 (164 aa).

C8, C11, C28, and C32 together coordinate Zn(2+). The HIT-type; degenerate zinc-finger motif lies at 8-49; sequence CGICRGVDGKYKCPKCGVRYCSLKCYKDAAKHVHKESEQPRA.

This Saccharomyces cerevisiae (strain ATCC 204508 / S288c) (Baker's yeast) protein is Protein HIT1 (HIT1).